The following is a 351-amino-acid chain: Phosphatidylinositol transfer protein PDR16 (351 aa).

In terms of domain architecture, CRAL-TRIO spans 135–295 (LVAVENESGK…LYGGDLKFKY (161 aa)).

In terms of assembly, homodimer. Apo-SFH3 forms a dimer through the hydrophobic interaction of gating helices. Binding of phosphatidylinositol leads to dissociation of the dimer into monomers in a reversible manner.

Its subcellular location is the lipid droplet. It is found in the microsome membrane. It localises to the endoplasmic reticulum membrane. The enzyme catalyses a 1,2-diacyl-sn-glycero-3-phospho-(1D-myo-inositol)(in) = a 1,2-diacyl-sn-glycero-3-phospho-(1D-myo-inositol)(out). In terms of biological role, has phosphatidylinositol transfer activity. Involved in the regulation of the phospholipid composition of plasma- and endomembranes. Altering plasma membrane composition may provide a possible mechanism for multidrug resistance. Involved in the regulation of sterol biosynthesis. Contributes to efficient phospholipase D1 activation in the regulation of phospholipid turnover. Regulates the release of fatty acids from lipid droplets. The chain is Phosphatidylinositol transfer protein PDR16 (PDR16) from Saccharomyces cerevisiae (strain ATCC 204508 / S288c) (Baker's yeast).